Reading from the N-terminus, the 479-residue chain is GTPase Obg (479 aa).

An Obg domain is found at 2 to 159; sequence PRFVDRVVIH…RDLTLELKTV (158 aa). An OBG-type G domain is found at 160–340; the sequence is ADVGLVGFPS…LIFGLWQMVS (181 aa). Residues 166–173, 191–195, 212–215, 292–295, and 321–323 contribute to the GTP site; these read GFPSAGKS, FTTLV, DVPG, NKID, and STV. S173 and T193 together coordinate Mg(2+). The region spanning 358–436 is the OCT domain; sequence PVPVDDSGFD…IGEMTFDWEP (79 aa). The interval 438–479 is disordered; that stretch reads TPAGGHVAMSGRGTDVRLERSDRVGAAERKAARRQRRERDDD. Positions 451–467 are enriched in basic and acidic residues; it reads TDVRLERSDRVGAAERK.

Belongs to the TRAFAC class OBG-HflX-like GTPase superfamily. OBG GTPase family. Monomer. Requires Mg(2+) as cofactor.

Its subcellular location is the cytoplasm. Its function is as follows. An essential GTPase which binds GTP, GDP and possibly (p)ppGpp with moderate affinity, with high nucleotide exchange rates and a fairly low GTP hydrolysis rate. Plays a role in control of the cell cycle, stress response, ribosome biogenesis and in those bacteria that undergo differentiation, in morphogenesis control. The sequence is that of GTPase Obg from Mycobacterium ulcerans (strain Agy99).